Reading from the N-terminus, the 437-residue chain is Protein farnesyltransferase subunit beta (437 aa).

PFTB repeat units lie at residues 123 to 164, 174 to 215, 222 to 263, 270 to 312, and 332 to 374; these read ATDV…CIIG, REKL…SLTN, FEGT…VILK, LKSL…PLLH, and QQAL…SIAQ. (2E,6E)-farnesyl diphosphate contacts are provided by residues 248–251 and 291–294; these read HGGY and RCNK. 2 residues coordinate Zn(2+): Asp297 and Cys299. Residue 300-303 coordinates (2E,6E)-farnesyl diphosphate; sequence YSFW. Residue His362 coordinates Zn(2+). Thr436 carries the post-translational modification Phosphothreonine.

The protein belongs to the protein prenyltransferase subunit beta family. In terms of assembly, heterodimer of FNTA and FNTB. The cofactor is Zn(2+).

The catalysed reaction is L-cysteinyl-[protein] + (2E,6E)-farnesyl diphosphate = S-(2E,6E)-farnesyl-L-cysteinyl-[protein] + diphosphate. Its function is as follows. Essential subunit of the farnesyltransferase complex. Catalyzes the transfer of a farnesyl moiety from farnesyl diphosphate to a cysteine at the fourth position from the C-terminus of several proteins having the C-terminal sequence Cys-aliphatic-aliphatic-X. In Bos taurus (Bovine), this protein is Protein farnesyltransferase subunit beta (FNTB).